The sequence spans 352 residues: Protein RecA (352 aa).

67–74 (GPESSGKT) serves as a coordination point for ATP.

It belongs to the RecA family.

It is found in the cytoplasm. Can catalyze the hydrolysis of ATP in the presence of single-stranded DNA, the ATP-dependent uptake of single-stranded DNA by duplex DNA, and the ATP-dependent hybridization of homologous single-stranded DNAs. It interacts with LexA causing its activation and leading to its autocatalytic cleavage. The chain is Protein RecA from Aggregatibacter actinomycetemcomitans (Actinobacillus actinomycetemcomitans).